The sequence spans 785 residues: MSVKEHNEEDIIGDELQNSRQLSIDCDSVKISLRNTYWTKDYTTGIKLFIKHMKRENDLLIKDIKFYNDFVNKFWKPTLNNLQKMEATNSMNSRLLEVMSKQFNIISTEQVERDCKIPLQELRDLNESFLREAENDLSSRYSAYIKDLVAAKEALIGCEKRVQSIYKLKKANTPVENSSSVFDNGKDSAPLTRLNFVCEFPYTLDERLKFEDCDQFMSFLQTLKGKVILEKSVFSVPGLSNQSFQGRSLIKELKKLEPRLNLSLFNIDRIGNEFIQLGIIQEYSLSFYSSKVSQFDQEKYYYWNSEVLATQESNGNAGNRKKKSYGELTHSDNEHEEKSNVSSIKTSISDWIRKVSQHDNDDCDAAGSTDMNKNEWKSLKQQLESSQDIFFSKCCQLEYSKVQLEKTIYDYCKNYSKMEDGIKRALESSNMMFQQKCEKFTDSPVCSLQEAQLPQETANADVRGFFLRDNGIPFRRWNILEASDPVDACKEISIKSEKFFCGSEINNELAALDTLGAIKIILRQIEKEPNANKVIQSWHRDIDFVRVSNLKRDLLGEFKGSKTTENTNSIITAHFFENSHSYVTNDLVGLIKLWLLELPDSLIPSNHYDDLIKAEKSLTSLCEQFPTSSLRFLQELANHFQLINSKYSLPPQTIQDLFRDNSDIDIPLAHHFVRRTGLQNPIDIKILSPTLSTFFINERTVETLQTLIANRITTATTATLTEPPTIIIKDTTAPIHSTPKPPPNDKDGHFIPRPFKTSSTPTTPERPKRKSGLFLPINVNDVPST.

Residue S2 is modified to N-acetylserine. One can recognise an F-BAR domain in the interval 31-463 (ISLRNTYWTK…PQETANADVR (433 aa)). The interval 313–340 (SNGNAGNRKKKSYGELTHSDNEHEEKSN) is disordered. A compositionally biased stretch (basic and acidic residues) spans 329 to 339 (THSDNEHEEKS). Residues 520-702 (IILRQIEKEP…TFFINERTVE (183 aa)) enclose the Rho-GAP domain. The disordered stretch occupies residues 732 to 785 (TAPIHSTPKPPPNDKDGHFIPRPFKTSSTPTTPERPKRKSGLFLPINVNDVPST). S759 bears the Phosphoserine mark. Residues T760, T762, and T763 each carry the phosphothreonine modification.

Post-translationally, phosphorylation at the C-terminus negatively regulates the activity and the polarized localization.

It is found in the cytoplasmic vesicle membrane. It localises to the cell membrane. The protein resides in the bud tip. The protein localises to the bud neck. In terms of biological role, GTPase activating protein (GAP) for RHO3 and CDC42 that binds membranes through phosphatidylinositol 4,5-bisphosphate. Plays a key role in cell polarity. Modulates the RHO3 distribution at the plasma membrane and its polarity during growth. The chain is Rho-GTPase-activating protein RGD3 from Saccharomyces cerevisiae (strain ATCC 204508 / S288c) (Baker's yeast).